The sequence spans 358 residues: 5-amino-6-(D-ribitylamino)uracil--L-tyrosine 4-hydroxyphenyl transferase 2 (358 aa).

The Radical SAM core domain occupies 45–292 (VTFVKNTNIE…ESIKNIQAPR (248 aa)). 3 residues coordinate [4Fe-4S] cluster: C59, C63, and C66.

This sequence belongs to the radical SAM superfamily. CofH family. In terms of assembly, consists of two subunits, CofG and CofH. Requires [4Fe-4S] cluster as cofactor.

It carries out the reaction 5-amino-6-(D-ribitylamino)uracil + L-tyrosine + S-adenosyl-L-methionine = 5-amino-5-(4-hydroxybenzyl)-6-(D-ribitylimino)-5,6-dihydrouracil + 2-iminoacetate + 5'-deoxyadenosine + L-methionine + H(+). It participates in cofactor biosynthesis; coenzyme F0 biosynthesis. Its function is as follows. Catalyzes the radical-mediated synthesis of 5-amino-5-(4-hydroxybenzyl)-6-(D-ribitylimino)-5,6-dihydrouracil from 5-amino-6-(D-ribitylamino)uracil and L-tyrosine. This Methanococcus maripaludis (strain DSM 14266 / JCM 13030 / NBRC 101832 / S2 / LL) protein is 5-amino-6-(D-ribitylamino)uracil--L-tyrosine 4-hydroxyphenyl transferase 2.